A 439-amino-acid polypeptide reads, in one-letter code: Adenylosuccinate synthetase (439 aa).

GTP contacts are provided by residues 14–20 and 42–44; these read GDEGKGK and GHT. D15 acts as the Proton acceptor in catalysis. Residues D15 and G42 each contribute to the Mg(2+) site. IMP is bound by residues 15–18, 40–43, T130, R144, Q225, T240, and R304; these read DEGK and NAGH. The active-site Proton donor is H43. 300–306 contacts substrate; the sequence is TTTGRRR. GTP contacts are provided by residues R306, 332-334, and 414-416; these read KLD and SLG.

It belongs to the adenylosuccinate synthetase family. In terms of assembly, homodimer. Mg(2+) serves as cofactor.

The protein resides in the cytoplasm. The catalysed reaction is IMP + L-aspartate + GTP = N(6)-(1,2-dicarboxyethyl)-AMP + GDP + phosphate + 2 H(+). Its pathway is purine metabolism; AMP biosynthesis via de novo pathway; AMP from IMP: step 1/2. Plays an important role in the de novo pathway of purine nucleotide biosynthesis. Catalyzes the first committed step in the biosynthesis of AMP from IMP. This Synechococcus sp. (strain CC9902) protein is Adenylosuccinate synthetase.